The sequence spans 186 residues: piRNA-mediated silencing protein C19orf84 (186 aa).

2 disordered regions span residues 1 to 42 (MEQP…NSTD) and 89 to 186 (SQAG…ETEY). The span at 13–22 (NNLSLPSSGT) shows a compositional bias: polar residues. The span at 24–36 (PWPPAPLPAPPPL) shows a compositional bias: pro residues. Residues 114 to 126 (RPGWGRGLHRRGL) are compositionally biased toward basic residues. A compositionally biased stretch (pro residues) spans 145–157 (RTPPMTLPSPPTL).

Interacts with SPOCD1.

The protein resides in the nucleus. Its subcellular location is the nucleoplasm. In terms of biological role, protein adapter involved in piRNA-directed transposon methylation by connecting PIWIL4-piRNA and DNA methylation machineries. The PIWIL4-piRNA pathway plays a central role during spermatogenesis by directing transposon DNA methylation and silencing, thereby preventing their mobilization, which is essential for the germline integrity. This is piRNA-mediated silencing protein C19orf84 from Homo sapiens (Human).